Here is a 167-residue protein sequence, read N- to C-terminus: Lipoprotein signal peptidase (167 aa).

Helical transmembrane passes span 9–29 (AWLY…TKNL), 68–88 (LPLL…YALY), and 98–118 (MGLI…LGMV). Active-site residues include D120 and D138. Residues 130 to 150 (YWPAFNIADASISIGIALLIL) traverse the membrane as a helical segment.

It belongs to the peptidase A8 family.

The protein localises to the cell inner membrane. The catalysed reaction is Release of signal peptides from bacterial membrane prolipoproteins. Hydrolyzes -Xaa-Yaa-Zaa-|-(S,diacylglyceryl)Cys-, in which Xaa is hydrophobic (preferably Leu), and Yaa (Ala or Ser) and Zaa (Gly or Ala) have small, neutral side chains.. It participates in protein modification; lipoprotein biosynthesis (signal peptide cleavage). In terms of biological role, this protein specifically catalyzes the removal of signal peptides from prolipoproteins. The protein is Lipoprotein signal peptidase of Aquifex aeolicus (strain VF5).